The following is an 877-amino-acid chain: Alanine--tRNA ligase (877 aa).

Histidine 567, histidine 571, cysteine 669, and histidine 673 together coordinate Zn(2+).

This sequence belongs to the class-II aminoacyl-tRNA synthetase family. Requires Zn(2+) as cofactor.

The protein localises to the cytoplasm. The enzyme catalyses tRNA(Ala) + L-alanine + ATP = L-alanyl-tRNA(Ala) + AMP + diphosphate. In terms of biological role, catalyzes the attachment of alanine to tRNA(Ala) in a two-step reaction: alanine is first activated by ATP to form Ala-AMP and then transferred to the acceptor end of tRNA(Ala). Also edits incorrectly charged Ser-tRNA(Ala) and Gly-tRNA(Ala) via its editing domain. This Rickettsia typhi (strain ATCC VR-144 / Wilmington) protein is Alanine--tRNA ligase.